A 273-amino-acid polypeptide reads, in one-letter code: Undecaprenyl-diphosphatase (273 aa).

Helical transmembrane passes span 6 to 26 (SLLV…LPVS), 45 to 65 (AKTF…VMFW), 90 to 110 (LTLI…LLFH), 116 to 136 (LFNP…LIAA), 190 to 210 (YAAS…ATAL), 222 to 242 (GDIP…LVAI), and 252 to 272 (ISFI…YVVF).

It belongs to the UppP family.

The protein localises to the cell inner membrane. It catalyses the reaction di-trans,octa-cis-undecaprenyl diphosphate + H2O = di-trans,octa-cis-undecaprenyl phosphate + phosphate + H(+). In terms of biological role, catalyzes the dephosphorylation of undecaprenyl diphosphate (UPP). Confers resistance to bacitracin. This Escherichia fergusonii (strain ATCC 35469 / DSM 13698 / CCUG 18766 / IAM 14443 / JCM 21226 / LMG 7866 / NBRC 102419 / NCTC 12128 / CDC 0568-73) protein is Undecaprenyl-diphosphatase.